Here is a 45-residue protein sequence, read N- to C-terminus: Photosystem II reaction center protein K (45 aa).

The propeptide occupies 1 to 8 (MLMSLFLA). Residues 23 to 43 (ILPIIPLFFLLLAFVWQAAIG) form a helical membrane-spanning segment.

Belongs to the PsbK family. As to quaternary structure, PSII is composed of 1 copy each of membrane proteins PsbA, PsbB, PsbC, PsbD, PsbE, PsbF, PsbH, PsbI, PsbJ, PsbK, PsbL, PsbM, PsbT, PsbX, PsbY, PsbZ, Psb30/Ycf12, at least 3 peripheral proteins of the oxygen-evolving complex and a large number of cofactors. It forms dimeric complexes.

The protein localises to the plastid. It is found in the cyanelle thylakoid membrane. In terms of biological role, one of the components of the core complex of photosystem II (PSII). PSII is a light-driven water:plastoquinone oxidoreductase that uses light energy to abstract electrons from H(2)O, generating O(2) and a proton gradient subsequently used for ATP formation. It consists of a core antenna complex that captures photons, and an electron transfer chain that converts photonic excitation into a charge separation. This is Photosystem II reaction center protein K from Cyanophora paradoxa.